We begin with the raw amino-acid sequence, 336 residues long: Poly(A) RNA polymerase cid12 (336 aa).

Mg(2+) contacts are provided by D77 and D79. Positions 209–263 (ALLQKFFYFWGVEWTYELFVLRPLTGQIVPKLQKGWLNEVQPNLLSIEDPIDRNN) constitute a PAP-associated domain. S325 bears the Phosphoserine mark. At T327 the chain carries Phosphothreonine. Phosphoserine is present on S329.

It belongs to the DNA polymerase type-B-like family. In terms of assembly, cid12, hrr1 and rdp1 interact forming the RNA-directed RNA polymerase complex (RDRC). The RDRC complex interacts with the RITS complex via interaction between ago1 and hrr1. Clr4 has a role in mediating this interaction. Requires Mg(2+) as cofactor. Mn(2+) serves as cofactor.

It is found in the cytoplasm. It localises to the nucleus. It carries out the reaction RNA(n) + ATP = RNA(n)-3'-adenine ribonucleotide + diphosphate. Functionally, has a role in the RNA interference (RNAi) pathway which is important for heterochromatin formation and accurate chromosome segregation. A member of the RNA-directed RNA polymerase complex (RDRC) which is involved in the generation of small interfering RNAs (siRNAs) and mediate their association with the RNA-induced transcriptional silencing (RITS) complex. RITS acts as a priming complex for dsRNA synthesis at the site of non-coding centromeric RNA. The sequence is that of Poly(A) RNA polymerase cid12 (cid12) from Schizosaccharomyces pombe (strain 972 / ATCC 24843) (Fission yeast).